The primary structure comprises 278 residues: Large ribosomal subunit protein uL2 (278 aa).

Disordered regions lie at residues 33–53 (LTEG…TSRG) and 221–278 (RGVA…KKKR). A compositionally biased stretch (basic residues) spans 269–278 (IRSRHAKKKR).

It belongs to the universal ribosomal protein uL2 family. Part of the 50S ribosomal subunit. Forms a bridge to the 30S subunit in the 70S ribosome.

Functionally, one of the primary rRNA binding proteins. Required for association of the 30S and 50S subunits to form the 70S ribosome, for tRNA binding and peptide bond formation. It has been suggested to have peptidyltransferase activity; this is somewhat controversial. Makes several contacts with the 16S rRNA in the 70S ribosome. In Novosphingobium aromaticivorans (strain ATCC 700278 / DSM 12444 / CCUG 56034 / CIP 105152 / NBRC 16084 / F199), this protein is Large ribosomal subunit protein uL2.